The primary structure comprises 475 residues: Ankyrin repeat, SAM and basic leucine zipper domain-containing protein 1 (475 aa).

The segment at 1–24 (MAGSLGNLVVAGGGESSDSEEDYW) is disordered. Phosphoserine occurs at positions 16, 17, and 19. 6 ANK repeats span residues 44-73 (ERDE…SVES), 77-106 (FGWT…NASF), 109-146 (DQYT…VACR), 147-176 (KCMT…EINA), 180-209 (NGYT…NKTI), and 213-242 (DGKT…PLQG). The region spanning 273 to 336 (TAFGDLEVFL…LDAVKELQVE (64 aa)) is the SAM domain.

In terms of assembly, interacts with DDX4, PIWIL1, RANBP9 and TDRD1.

It localises to the cytoplasm. Functionally, plays a central role during spermatogenesis by repressing transposable elements and preventing their mobilization, which is essential for the germline integrity. Acts via the piRNA metabolic process, which mediates the repression of transposable elements during meiosis by forming complexes composed of piRNAs and Piwi proteins and governs the methylation and subsequent repression of transposons. Its association with pi-bodies suggests a participation in the primary piRNAs metabolic process. Required prior to the pachytene stage to facilitate the production of multiple types of piRNAs, including those associated with repeats involved in the regulation of retrotransposons. May act by mediating protein-protein interactions during germ cell maturation. This chain is Ankyrin repeat, SAM and basic leucine zipper domain-containing protein 1 (ASZ1), found in Notamacropus eugenii (Tammar wallaby).